Reading from the N-terminus, the 474-residue chain is Glutathione synthetase (474 aa).

A2 is subject to N-acetylalanine. R125 serves as a coordination point for substrate. E144 is an ATP binding site. Mg(2+) contacts are provided by E144 and N146. Substrate contacts are provided by residues 148-151 (ISAS), 214-216 (ERN), Q220, and 267-270 (RDGY). ATP contacts are provided by residues K305, 364-373 (KPQREGGGNN), Y375, and 398-401 (MEKI). E368 is a Mg(2+) binding site. At S415 the chain carries Phosphoserine. Residue E425 coordinates ATP. Residue R450 coordinates substrate. The ATP site is built by K452 and D458. 461-462 (VA) is a substrate binding site.

Belongs to the eukaryotic GSH synthase family. As to quaternary structure, homodimer. Mg(2+) serves as cofactor.

It carries out the reaction gamma-L-glutamyl-L-cysteine + glycine + ATP = glutathione + ADP + phosphate + H(+). It catalyses the reaction gamma-L-glutamyl-(2S)-2-aminobutanoate + glycine + ATP = ophthalmate + ADP + phosphate + H(+). It participates in sulfur metabolism; glutathione biosynthesis; glutathione from L-cysteine and L-glutamate: step 2/2. Catalyzes the production of glutathione from gamma-glutamylcysteine and glycine in an ATP-dependent manner. Glutathione (gamma-glutamylcysteinylglycine, GSH) is the most abundant intracellular thiol in living aerobic cells and is required for numerous processes including the protection of cells against oxidative damage, amino acid transport, the detoxification of foreign compounds, the maintenance of protein sulfhydryl groups in a reduced state and acts as a cofactor for a number of enzymes. Participates in ophthalmate biosynthesis in hepatocytes. The protein is Glutathione synthetase of Rattus norvegicus (Rat).